Reading from the N-terminus, the 329-residue chain is Alpha/beta hydrolase domain-containing protein 17C (329 aa).

The tract at residues 46-85 (APEQRGPGAPAPASAASTSSASAAAQPAPQQPEEGGAGPG) is disordered. The segment covering 51 to 79 (GPGAPAPASAASTSSASAAAQPAPQQPEE) has biased composition (low complexity). Active-site charge relay system residues include Ser211, Asp276, and His305.

Belongs to the AB hydrolase superfamily. ABHD17 family. Post-translationally, palmitoylated on cysteine residues located in a cysteine cluster at the N-terminus which promotes membrane localization. Palmitoylation is required for post-synaptic localization and for depalmitoylating activity towards DLG4/PSD95.

The protein resides in the recycling endosome membrane. It localises to the cell projection. Its subcellular location is the dendritic spine. It is found in the postsynaptic density membrane. The enzyme catalyses S-hexadecanoyl-L-cysteinyl-[protein] + H2O = L-cysteinyl-[protein] + hexadecanoate + H(+). Its function is as follows. Hydrolyzes fatty acids from S-acylated cysteine residues in proteins. Has depalmitoylating activity towards NRAS and DLG4/PSD95. The polypeptide is Alpha/beta hydrolase domain-containing protein 17C (Bos taurus (Bovine)).